Consider the following 230-residue polypeptide: LexA repressor (230 aa).

Positions 28-48 (IREIGEALDIRSTNGVNDHLK) form a DNA-binding region, H-T-H motif. Residues serine 148 and lysine 185 each act as for autocatalytic cleavage activity in the active site.

Belongs to the peptidase S24 family. As to quaternary structure, homodimer.

The catalysed reaction is Hydrolysis of Ala-|-Gly bond in repressor LexA.. Its function is as follows. Represses a number of genes involved in the response to DNA damage (SOS response), including recA and lexA. In the presence of single-stranded DNA, RecA interacts with LexA causing an autocatalytic cleavage which disrupts the DNA-binding part of LexA, leading to derepression of the SOS regulon and eventually DNA repair. This chain is LexA repressor, found in Anaeromyxobacter sp. (strain K).